The primary structure comprises 435 residues: Arginine/serine-rich coiled-coil protein 2 (435 aa).

Basic and acidic residues predominate over residues 1–27 (MAASDTERDGLAPEKTSPDRDKKKEQS). The interval 1–230 (MAASDTERDG…PSPPPFRGRN (230 aa)) is disordered. An N-acetylalanine modification is found at Ala2. Ser4 carries the phosphoserine modification. Phosphothreonine is present on residues Thr6 and Thr16. Phosphoserine is present on residues Ser17, Ser30, and Ser32. Positions 35–51 (ASKHHYSRSRSRSRERK) are enriched in basic residues. The segment covering 66–111 (RSKEARRHESKDKSSKKHKSEEHNDKEHSSDKGRERLNSSENGEDR) has biased composition (basic and acidic residues). A Phosphoserine modification is found at Ser104. Residues 112–214 (HKRKERKSSR…KRIEKPRRFS (103 aa)) show a composition bias toward basic residues. The stretch at 230-270 (NTAMDAQEALARRLERAKKLQEQREKEMVEKQKQQEIAAAA) forms a coiled coil. Lys376 is covalently cross-linked (Glycyl lysine isopeptide (Lys-Gly) (interchain with G-Cter in SUMO1); alternate). Lys376 is covalently cross-linked (Glycyl lysine isopeptide (Lys-Gly) (interchain with G-Cter in SUMO2); alternate). Ser377 carries the phosphoserine modification.

Belongs to the RSRC2 family.

The protein is Arginine/serine-rich coiled-coil protein 2 (RSRC2) of Pongo abelii (Sumatran orangutan).